Reading from the N-terminus, the 176-residue chain is MTTIVSVRRHGKVVMGGDGQVSLGNTVMKGNAKKVRRLYHGQVIAGFAGATADAFTLFERFEGQLEKHQGHLVRAAVELAKEWRTDRSLSRLEAMLAVANKDASLIITGNGDVVEPEDGLIAMGSGGAYAQAAASALLKKTDLSAREIVETALGIAGDICVFTNHTQTIEEQDLAE.

The active site involves Thr-2. The Na(+) site is built by Gly-157, Cys-160, and Thr-163.

Belongs to the peptidase T1B family. HslV subfamily. A double ring-shaped homohexamer of HslV is capped on each side by a ring-shaped HslU homohexamer. The assembly of the HslU/HslV complex is dependent on binding of ATP.

It is found in the cytoplasm. It catalyses the reaction ATP-dependent cleavage of peptide bonds with broad specificity.. Allosterically activated by HslU binding. Its function is as follows. Protease subunit of a proteasome-like degradation complex believed to be a general protein degrading machinery. The polypeptide is ATP-dependent protease subunit HslV (Pseudomonas fluorescens (strain ATCC BAA-477 / NRRL B-23932 / Pf-5)).